The primary structure comprises 420 residues: UDP-N-acetyl-D-mannosamine dehydrogenase (420 aa).

5 residues coordinate NAD(+): tyrosine 13, isoleucine 14, aspartate 33, threonine 85, and threonine 126. Residues arginine 160, valine 161, lysine 212, asparagine 216, arginine 219, histidine 250, arginine 252, and glycine 263 each coordinate UDP-N-acetyl-alpha-D-mannosaminouronate. Residue lysine 212 is the Proton donor/acceptor of the active site. The Nucleophile role is filled by cysteine 266. 2 residues coordinate UDP-N-acetyl-alpha-D-mannosaminouronate: phenylalanine 330 and lysine 331. Arginine 338 provides a ligand contact to NAD(+). Lysine 416 contributes to the UDP-N-acetyl-alpha-D-mannosaminouronate binding site.

The protein belongs to the UDP-glucose/GDP-mannose dehydrogenase family. WecC subfamily. Homodimer.

It catalyses the reaction UDP-N-acetyl-alpha-D-mannosamine + 2 NAD(+) + H2O = UDP-N-acetyl-alpha-D-mannosaminouronate + 2 NADH + 3 H(+). The protein operates within bacterial outer membrane biogenesis; enterobacterial common antigen biosynthesis. Catalyzes the four-electron oxidation of UDP-N-acetyl-D-mannosamine (UDP-ManNAc), reducing NAD(+) and releasing UDP-N-acetylmannosaminuronic acid (UDP-ManNAcA). This Shigella flexneri protein is UDP-N-acetyl-D-mannosamine dehydrogenase.